Consider the following 302-residue polypeptide: Arginase (302 aa).

Mn(2+) contacts are provided by H103, D126, H128, and D130. Residues 128 to 132 (HGDLN), 139 to 141 (SGN), and D180 contribute to the substrate site. Mn(2+)-binding residues include D229 and D231. Residues T243 and E274 each coordinate substrate.

It belongs to the arginase family. The cofactor is Mn(2+).

It catalyses the reaction L-arginine + H2O = urea + L-ornithine. The protein operates within nitrogen metabolism; urea cycle; L-ornithine and urea from L-arginine: step 1/1. The sequence is that of Arginase (arg) from Staphylococcus aureus (strain MRSA252).